The following is a 508-amino-acid chain: Bifunctional purine biosynthesis protein PurH (508 aa).

Positions 1-145 (MAKKALISVS…KNYKYVTILV (145 aa)) constitute an MGS-like domain.

The protein belongs to the PurH family.

The catalysed reaction is (6R)-10-formyltetrahydrofolate + 5-amino-1-(5-phospho-beta-D-ribosyl)imidazole-4-carboxamide = 5-formamido-1-(5-phospho-D-ribosyl)imidazole-4-carboxamide + (6S)-5,6,7,8-tetrahydrofolate. It carries out the reaction IMP + H2O = 5-formamido-1-(5-phospho-D-ribosyl)imidazole-4-carboxamide. The protein operates within purine metabolism; IMP biosynthesis via de novo pathway; 5-formamido-1-(5-phospho-D-ribosyl)imidazole-4-carboxamide from 5-amino-1-(5-phospho-D-ribosyl)imidazole-4-carboxamide (10-formyl THF route): step 1/1. It participates in purine metabolism; IMP biosynthesis via de novo pathway; IMP from 5-formamido-1-(5-phospho-D-ribosyl)imidazole-4-carboxamide: step 1/1. This Thermoanaerobacter sp. (strain X514) protein is Bifunctional purine biosynthesis protein PurH.